The primary structure comprises 544 residues: Chaperonin GroEL (544 aa).

ATP-binding positions include 30–33 (TLGP), Lys51, 87–91 (DGTTT), Gly415, 479–481 (NAA), and Asp495.

It belongs to the chaperonin (HSP60) family. In terms of assembly, forms a cylinder of 14 subunits composed of two heptameric rings stacked back-to-back. Interacts with the co-chaperonin GroES.

It localises to the cytoplasm. It catalyses the reaction ATP + H2O + a folded polypeptide = ADP + phosphate + an unfolded polypeptide.. Functionally, together with its co-chaperonin GroES, plays an essential role in assisting protein folding. The GroEL-GroES system forms a nano-cage that allows encapsulation of the non-native substrate proteins and provides a physical environment optimized to promote and accelerate protein folding. The polypeptide is Chaperonin GroEL (Acinetobacter baylyi (strain ATCC 33305 / BD413 / ADP1)).